Here is a 467-residue protein sequence, read N- to C-terminus: Protein indeterminate-domain 6, chloroplastic (467 aa).

The transit peptide at M1 to S20 directs the protein to the chloroplast. The segment at T38–D65 is disordered. Residues M39–V48 are compositionally biased toward polar residues. Position 72 is a phosphoserine (S72). C2H2-type zinc fingers lie at residues F82 to H104 and Y123 to H153. A C2H2-type 2; degenerate zinc finger spans residues W158–G181. The Zn(2+) site is built by C160, C163, H176, C180, C187, C189, H202, and C206. The CCHC-type 2; atypical zinc-finger motif lies at Y185–A208. An SHR-binding region spans residues R195–D207. The disordered stretch occupies residues N440–A467.

The protein localises to the plastid. Its subcellular location is the chloroplast. Its function is as follows. Probable transcription factor. The polypeptide is Protein indeterminate-domain 6, chloroplastic (Arabidopsis thaliana (Mouse-ear cress)).